A 267-amino-acid chain; its full sequence is MRIYVCVKQVPDTSGKVAVNPDGTLNRASMAAIINPDDMSAIEQALKLKDETGCQVTALTMGPPPAEGMLREIIAMGADDGVLISAREFGGSDTFATSQIISAAIHKLGLSNEDMIFCGRQAIDGDTAQVGPQIAEKLSIPQVTYGAGIKKSGDLVLVKRMLEDGYMMIEVETPCLITCIQDKAVKPRYMTLNGIMECYSKPLLVLDYEALKDEPLIELDTIGLKGSPTNIFKSFTPPQKGVGVMLQGTDKEKVEDLVDKLMQKHVI.

Heterohexadecamer; tetramer of tetramers. Each tetramer is composed of 2 alpha (AcrC), a beta (AcrA) and a gamma (AcrB) subunit.

It localises to the cytoplasm. In terms of biological role, part of the ETF-acryloyl-CoA reductase complex involved in the pathway of L-alanine fermentation. The electron transfer flavoprotein (ETF) serves as a specific electron acceptor for acryloyl-CoA reductase. This Anaerotignum propionicum (Clostridium propionicum) protein is Acryloyl-CoA reductase electron transfer subunit gamma (acrB).